The following is a 334-amino-acid chain: Immune-associated nucleotide-binding protein 3 (334 aa).

Positions 11–219 constitute an AIG1-type G domain; that stretch reads KAVKNIVLVG…FRGKMYLEIK (209 aa). The interval 20 to 27 is G1; it reads GRTGNGKS. Residues 20–28 and Ser-41 each bind GTP; that span reads GRTGNGKSA. The G2 stretch occupies residues 47–51; it reads GVTKT. The tract at residues 69 to 72 is G3; sequence DTPG. The interval 139-142 is G4; that stretch reads TGGD. Residues 178–180 form a G5 region; sequence NNM. Asn-179 is a GTP binding site. Residues 272–306 are a coiled coil; it reads SAAHERMVSMLNENLENAHRENIDLRKAHDHEQKK.

It belongs to the TRAFAC class TrmE-Era-EngA-EngB-Septin-like GTPase superfamily. AIG1/Toc34/Toc159-like paraseptin GTPase family. IAN subfamily. In terms of tissue distribution, mostly expressed in pollen. Also detected in lateral roots and radicles.

This Arabidopsis thaliana (Mouse-ear cress) protein is Immune-associated nucleotide-binding protein 3.